The sequence spans 655 residues: Probable alpha-galactosidase D (655 aa).

An N-terminal signal peptide occupies residues 1 to 16 (MASVIALSLLLPAAFA). N-linked (GlcNAc...) asparagine glycans are attached at residues N87 and N93. C126 and C153 are oxidised to a cystine. The Nucleophile role is filled by D151. Residue 196-200 (EWGID) coordinates substrate. The active-site Proton donor is the D218. N-linked (GlcNAc...) asparagine glycosylation is found at N432, N482, N502, N540, and N579.

Belongs to the glycosyl hydrolase 27 family.

It localises to the secreted. The catalysed reaction is Hydrolysis of terminal, non-reducing alpha-D-galactose residues in alpha-D-galactosides, including galactose oligosaccharides, galactomannans and galactolipids.. Hydrolyzes a variety of simple alpha-D-galactoside as well as more complex molecules such as oligosaccharides and polysaccharides. This Aspergillus terreus (strain NIH 2624 / FGSC A1156) protein is Probable alpha-galactosidase D (aglD).